The primary structure comprises 122 residues: NADH-quinone oxidoreductase subunit A (122 aa).

The next 3 helical transmembrane spans lie at 12 to 32 (IIIF…VNLI), 66 to 86 (LVAI…PWAI), and 91 to 111 (IGGL…VGFI).

Belongs to the complex I subunit 3 family. In terms of assembly, NDH-1 is composed of 14 different subunits. Subunits NuoA, H, J, K, L, M, N constitute the membrane sector of the complex.

The protein localises to the cell inner membrane. The catalysed reaction is a quinone + NADH + 5 H(+)(in) = a quinol + NAD(+) + 4 H(+)(out). Its function is as follows. NDH-1 shuttles electrons from NADH, via FMN and iron-sulfur (Fe-S) centers, to quinones in the respiratory chain. The immediate electron acceptor for the enzyme in this species is believed to be ubiquinone. Couples the redox reaction to proton translocation (for every two electrons transferred, four hydrogen ions are translocated across the cytoplasmic membrane), and thus conserves the redox energy in a proton gradient. The sequence is that of NADH-quinone oxidoreductase subunit A from Pelagibacter ubique (strain HTCC1062).